A 114-amino-acid chain; its full sequence is Ribonuclease P protein component (114 aa).

It belongs to the RnpA family. As to quaternary structure, consists of a catalytic RNA component (M1 or rnpB) and a protein subunit.

The catalysed reaction is Endonucleolytic cleavage of RNA, removing 5'-extranucleotides from tRNA precursor.. RNaseP catalyzes the removal of the 5'-leader sequence from pre-tRNA to produce the mature 5'-terminus. It can also cleave other RNA substrates such as 4.5S RNA. The protein component plays an auxiliary but essential role in vivo by binding to the 5'-leader sequence and broadening the substrate specificity of the ribozyme. This is Ribonuclease P protein component from Legionella pneumophila (strain Lens).